Here is a 101-residue protein sequence, read N- to C-terminus: Protein RADIALIS-like 2 (101 aa).

The region spanning 9–64 is the SANT domain; sequence YGSGSWTVKQNKAFERALAVYDQDTPDRWHNVARAVGGKTPEEAKRQYDLLVRDIE. The segment at 69–101 is disordered; the sequence is GHVPFPDYKTTTGNSNRGRLRDEEKRMRSMKLQ.

Expressed in the funiculus of ovules and in embryos. In young ovules, expression is observed in the adaxial side of the funiculus (the stalk connecting the embryo sac to the placenta). Also expressed in heart-stage embryos, in the cortex and endodermis of the hypocotyl region but not in the cotyledons, shoot and root apical meristems, provasculature or epidermis. Not detected in young seedlings, mature roots or in young floral primordia.

It localises to the nucleus. Functionally, probable transcription factor. Required for female gametophyte development. In Arabidopsis thaliana (Mouse-ear cress), this protein is Protein RADIALIS-like 2 (RL2).